A 368-amino-acid polypeptide reads, in one-letter code: Probable endopolygalacturonase I (368 aa).

The signal sequence occupies residues 1-18 (MRSVEILGLAALGSLVAA). Residues 19–31 (APSPSRVSNSAKK) constitute a propeptide that is removed on maturation. An intrachain disulfide couples Cys-35 to Cys-50. PbH1 repeat units lie at residues 162–192 (ATNL…DIGE) and 193–214 (SNGV…AINS). The Proton donor role is filled by Asp-207. The cysteines at positions 209 and 225 are disulfide-linked. Residue His-229 is part of the active site. PbH1 repeat units lie at residues 244–265 (VKNV…RIKT), 273–295 (VGDV…VIEQ), and 307–328 (TTGV…ASNA). A glycan (N-linked (GlcNAc...) asparagine) is linked at Asn-246. Intrachain disulfides connect Cys-335/Cys-340 and Cys-359/Cys-368.

It belongs to the glycosyl hydrolase 28 family.

The protein resides in the secreted. It carries out the reaction (1,4-alpha-D-galacturonosyl)n+m + H2O = (1,4-alpha-D-galacturonosyl)n + (1,4-alpha-D-galacturonosyl)m.. Its function is as follows. Involved in maceration and soft-rotting of plant tissue. Hydrolyzes the 1,4-alpha glycosidic bonds of de-esterified pectate in the smooth region of the plant cell wall. In Aspergillus clavatus (strain ATCC 1007 / CBS 513.65 / DSM 816 / NCTC 3887 / NRRL 1 / QM 1276 / 107), this protein is Probable endopolygalacturonase I (pgaI).